A 327-amino-acid chain; its full sequence is ATPase ASNA1 homolog (327 aa).

26–33 (KGGVGKTT) contributes to the ATP binding site. The active site involves D57. The ATP site is built by E238 and N265. C274 and C277 together coordinate Zn(2+).

It belongs to the arsA ATPase family. In terms of assembly, homodimer.

It is found in the cytoplasm. It localises to the endoplasmic reticulum. Its function is as follows. ATPase required for the post-translational delivery of tail-anchored (TA) proteins to the endoplasmic reticulum. Recognizes and selectively binds the transmembrane domain of TA proteins in the cytosol. This complex then targets to the endoplasmic reticulum by membrane-bound receptors, where the tail-anchored protein is released for insertion. This process is regulated by ATP binding and hydrolysis. ATP binding drives the homodimer towards the closed dimer state, facilitating recognition of newly synthesized TA membrane proteins. ATP hydrolysis is required for insertion. Subsequently, the homodimer reverts towards the open dimer state, lowering its affinity for the membrane-bound receptor, and returning it to the cytosol to initiate a new round of targeting. The protein is ATPase ASNA1 homolog of Entamoeba dispar (strain ATCC PRA-260 / SAW760).